The chain runs to 395 residues: F-box/LRR-repeat protein 12 (395 aa).

Positions 13-61 (TSIIHLPDDCLSFIFQRLDSVADHDSFGLTCHRWLNIQNISRRSLQFQC) constitute an F-box domain. LRR repeat units follow at residues 75 to 100 (NPDVSSHHLHRLLTRFQWLEHLSLSG), 101 to 126 (CTVLNDSSLDSLRYPGARLHTLYLDC), 127 to 152 (CFGISDDGISTIASFCPNLSVVSLYR), 154 to 177 (NISDIGLETLARASLSLKCVNLSY), 178 to 203 (CPLVSDFGIKALSQACLQLESVKISN), 226 to 250 (SCQLEPKGITGIISGGGIEFLNISG), 252 to 278 (SCYIRKDGLVPIGSGIASKLRILNLRM), 279 to 304 (CRTVGDESIEAIAKGCPLLQEWNLAL), 305 to 330 (CHEVKISGWEAVGKWCRNLKKLHVNR), and 331 to 356 (CRNLCDQGLLALRCGCMNLQILYMNG).

This Arabidopsis thaliana (Mouse-ear cress) protein is F-box/LRR-repeat protein 12 (FBL12).